A 264-amino-acid chain; its full sequence is Segregation and condensation protein A (264 aa).

It belongs to the ScpA family. In terms of assembly, component of a cohesin-like complex composed of ScpA, ScpB and the Smc homodimer, in which ScpA and ScpB bind to the head domain of Smc. The presence of the three proteins is required for the association of the complex with DNA.

The protein localises to the cytoplasm. Participates in chromosomal partition during cell division. May act via the formation of a condensin-like complex containing Smc and ScpB that pull DNA away from mid-cell into both cell halves. This chain is Segregation and condensation protein A, found in Enterococcus faecalis (strain ATCC 700802 / V583).